The following is a 476-amino-acid chain: Angiotensinogen (476 aa).

Residues Met-1 to Gly-24 form the signal peptide. 4 N-linked (GlcNAc...) asparagine glycosylation sites follow: Asn-38, Asn-161, Asn-295, and Asn-319. A disulfide bridge links Cys-42 with Cys-162.

It belongs to the serpin family. In terms of processing, in response to low blood pressure, the enzyme renin/REN cleaves angiotensinogen to produce angiotensin-1. Angiotensin-1 is a substrate of ACE (angiotensin converting enzyme) that removes a dipeptide to yield the physiologically active peptide angiotensin-2. Angiotensin-1 and angiotensin-2 can be further processed to generate angiotensin-3, angiotensin-4. Angiotensin 1-9 is cleaved from angiotensin-1 by ACE2 and can be further processed by ACE to produce angiotensin 1-7, angiotensin 1-5 and angiotensin 1-4. Angiotensin 1-7 has also been proposed to be cleaved from angiotensin-2 by ACE2 or from angiotensin-1 by MME (neprilysin). Post-translationally, the disulfide bond is labile. Angiotensinogen is present in the circulation in a near 40:60 ratio with the oxidized disulfide-bonded form, which preferentially interacts with receptor-bound renin.

It localises to the secreted. Functionally, essential component of the renin-angiotensin system (RAS), a potent regulator of blood pressure, body fluid and electrolyte homeostasis. Acts directly on vascular smooth muscle as a potent vasoconstrictor, affects cardiac contractility and heart rate through its action on the sympathetic nervous system, and alters renal sodium and water absorption through its ability to stimulate the zona glomerulosa cells of the adrenal cortex to synthesize and secrete aldosterone. Acts by binding to angiotensin receptors AGTR1 and AGTR2. Also binds the DEAR/FBXW7-AS1 receptor. Its function is as follows. Stimulates aldosterone release. In terms of biological role, is a ligand for the G-protein coupled receptor MAS1. Has vasodilator and antidiuretic effects. Has an antithrombotic effect that involves MAS1-mediated release of nitric oxide from platelets. This Gorilla gorilla gorilla (Western lowland gorilla) protein is Angiotensinogen (AGT).